The following is a 98-amino-acid chain: Keratin, high sulfur matrix protein, IIIB3 (98 aa).

A1 carries the post-translational modification N-acetylalanine.

This sequence belongs to the KRTAP type 3 family. In terms of assembly, interacts with wool keratins. In terms of tissue distribution, wool.

Its function is as follows. In the wool cortex, wool keratin intermediate filaments are embedded in an interfilamentous matrix, consisting of hair keratin-associated proteins (KRTAP), which are essential for the formation of a rigid and resistant wool shaft through their extensive disulfide bond cross-linking with abundant cysteine residues of wool keratins. The matrix proteins include the high-sulfur and high-glycine-tyrosine keratins. The sequence is that of Keratin, high sulfur matrix protein, IIIB3 from Ovis aries (Sheep).